The primary structure comprises 523 residues: 2-isopropylmalate synthase (523 aa).

The 263-residue stretch at 5 to 267 folds into the Pyruvate carboxyltransferase domain; sequence VIIFDTTLRD…HTAINHQEIW (263 aa). Mn(2+)-binding residues include aspartate 14, histidine 202, histidine 204, and asparagine 238. Residues 392-523 are regulatory domain; that stretch reads RLDYFSVQSG…QHNENNKETV (132 aa).

This sequence belongs to the alpha-IPM synthase/homocitrate synthase family. LeuA type 1 subfamily. Homodimer. It depends on Mn(2+) as a cofactor.

Its subcellular location is the cytoplasm. It catalyses the reaction 3-methyl-2-oxobutanoate + acetyl-CoA + H2O = (2S)-2-isopropylmalate + CoA + H(+). Its pathway is amino-acid biosynthesis; L-leucine biosynthesis; L-leucine from 3-methyl-2-oxobutanoate: step 1/4. Functionally, catalyzes the condensation of the acetyl group of acetyl-CoA with 3-methyl-2-oxobutanoate (2-ketoisovalerate) to form 3-carboxy-3-hydroxy-4-methylpentanoate (2-isopropylmalate). In Escherichia coli O81 (strain ED1a), this protein is 2-isopropylmalate synthase.